We begin with the raw amino-acid sequence, 310 residues long: Apolipoprotein E (310 aa).

The signal sequence occupies residues 1 to 18 (MKVLWAALVVTLLAGCQA). 4 repeat units span residues 77–98 (ALME…QQLG), 99–120 (PTAQ…ARLG), 121–142 (ADME…AMMG), and 143–164 (QSTE…KRLL). The segment at 77-248 (ALMEETMKEV…RLDEVREQVQ (172 aa)) is 8 X 22 AA approximate tandem repeats. A Methionine sulfoxide modification is found at M140. S144 is subject to Phosphoserine. The interval 155-165 (HLRKLRKRLLR) is LDL and other lipoprotein receptors binding. Heparin is bound at residue 159-162 (LRKR). Residues 165 to 186 (RDAEDLQKRLAVYQAGIREGAE) constitute a repeat. Tandem repeats lie at residues 187 to 204 (RSVN…EQAA), 205 to 226 (TVRS…QRLR), and 227 to 248 (GRLE…EQVQ). Residues 203-283 (AATVRSLISK…SWFEPLVQDM (81 aa)) form a lipid-binding and lipoprotein association region. 222 to 229 (GQRLRGRL) provides a ligand contact to heparin. Residues 259 to 310 (NQMRLQAEAFHARLKSWFEPLVQDMQQKWAELVEKVQLAVGTSPTSESSEKQ) form a homooligomerization region. A specificity for association with VLDL region spans residues 271–283 (RLKSWFEPLVQDM).

This sequence belongs to the apolipoprotein A1/A4/E family. As to quaternary structure, homotetramer. May interact with ABCA1; functionally associated with ABCA1 in the biogenesis of HDLs. May interact with APP/A4 amyloid-beta peptide; the interaction is extremely stable in vitro but its physiological significance is unclear. May interact with MAPT. May interact with MAP2. In the cerebrospinal fluid, interacts with secreted SORL1. Interacts with PMEL; this allows the loading of PMEL luminal fragment on ILVs to induce fibril nucleation. In terms of processing, APOE exists as multiple glycosylated and sialylated glycoforms within cells and in plasma. The extent of glycosylation and sialylation are tissue and context specific. Glycated in plasma VLDL. Post-translationally, phosphorylated by FAM20C in the extracellular medium.

It localises to the secreted. The protein localises to the extracellular space. Its subcellular location is the extracellular matrix. It is found in the extracellular vesicle. The protein resides in the endosome. It localises to the multivesicular body. APOE is an apolipoprotein, a protein associating with lipid particles, that mainly functions in lipoprotein-mediated lipid transport between organs via the plasma and interstitial fluids. APOE is a core component of plasma lipoproteins and is involved in their production, conversion and clearance. Apolipoproteins are amphipathic molecules that interact both with lipids of the lipoprotein particle core and the aqueous environment of the plasma. As such, APOE associates with chylomicrons, chylomicron remnants, very low density lipoproteins (VLDL) and intermediate density lipoproteins (IDL) but shows a preferential binding to high-density lipoproteins (HDL). It also binds a wide range of cellular receptors including the LDL receptor/LDLR, the LDL receptor-related proteins LRP1, LRP2 and LRP8 and the very low-density lipoprotein receptor/VLDLR that mediate the cellular uptake of the APOE-containing lipoprotein particles. Finally, APOE also has a heparin-binding activity and binds heparan-sulfate proteoglycans on the surface of cells, a property that supports the capture and the receptor-mediated uptake of APOE-containing lipoproteins by cells. A main function of APOE is to mediate lipoprotein clearance through the uptake of chylomicrons, VLDLs, and HDLs by hepatocytes. APOE is also involved in the biosynthesis by the liver of VLDLs as well as their uptake by peripheral tissues ensuring the delivery of triglycerides and energy storage in muscle, heart and adipose tissues. By participating in the lipoprotein-mediated distribution of lipids among tissues, APOE plays a critical role in plasma and tissues lipid homeostasis. APOE is also involved in two steps of reverse cholesterol transport, the HDLs-mediated transport of cholesterol from peripheral tissues to the liver, and thereby plays an important role in cholesterol homeostasis. First, it is functionally associated with ABCA1 in the biogenesis of HDLs in tissues. Second, it is enriched in circulating HDLs and mediates their uptake by hepatocytes. APOE also plays an important role in lipid transport in the central nervous system, regulating neuron survival and sprouting. The protein is Apolipoprotein E (APOE) of Tapirus terrestris (Lowland tapir).